A 371-amino-acid polypeptide reads, in one-letter code: MPHQQMLILFGLLPVATNISTWWNFGSMLLACSSMQVLTGFFLAVHYTANINLAFSSIVHITRDVPYGWMMQNLHAIGASMFFICIYIHIARGLYYGSYLNKKTWLSGTTLLIMLMATAXXXXXXXXXXXXXXXXXXXXXXXXXXXXXXXXXXXXXXXXXXXXXXXXXXXXXXXXILPFGIISLSSLHIMLLHEDGSSNPLGTNSDIDKIPFHPYHTYKDLLMLSLMVLTLLMTVSFLPDIFNDPDNFSKANPLVTPQHIKPEWYFLFAYGILRSVPNKLGGALALAMSIMILLTTPFTHTSTIRSMTFRPIMQLMFWTLVATFVVITWAATKPVEPPFTMISQVASTMYFLFFITNPITGLVENKIMKYN.

4 helical membrane passes run 25–45 (FGSMLLACSSMQVLTGFFLAV), 69–90 (WMMQNLHAIGASMFFICIYIHI), 105–125 (WLSGTTLLIMLMATAXXXXXX), and 170–190 (XXXXXXILPFGIISLSSLHIM). His-75 and His-89 together coordinate heme b. Xaa-174 and His-188 together coordinate heme b. Position 193 (His-193) interacts with a ubiquinone. 4 helical membrane-spanning segments follow: residues 218–238 (YKDLLMLSLMVLTLLMTVSFL), 280–300 (LGGALALAMSIMILLTTPFTH), 312–332 (IMQLMFWTLVATFVVITWAAT), and 339–358 (FTMISQVASTMYFLFFITNP).

The protein belongs to the cytochrome b family. In terms of assembly, the cytochrome bc1 complex contains 3 respiratory subunits (MT-CYB, CYC1 and UQCRFS1), 2 core proteins (UQCRC1 and UQCRC2) and probably 6 low-molecular weight proteins. Requires heme b as cofactor.

It localises to the mitochondrion inner membrane. Its function is as follows. Component of the ubiquinol-cytochrome c reductase complex (complex III or cytochrome b-c1 complex) that is part of the mitochondrial respiratory chain. The b-c1 complex mediates electron transfer from ubiquinol to cytochrome c. Contributes to the generation of a proton gradient across the mitochondrial membrane that is then used for ATP synthesis. The polypeptide is Cytochrome b (MT-CYB) (Eryx jaculus (Javelin sand boa)).